A 318-amino-acid polypeptide reads, in one-letter code: MDSEIAFDYSPRFRIFKNGGIERLVPETFVPPSLNPENGVVSKDAVYSPEKNLSLRIYLPQNSVYETGEKKIPLLVYFHGGGFIMETAFSPIYHTFLTSAVSATDCIAVSVEYRRAPEHPIPTLYEDSWDAIQWIFTHITRSGPEDWLNKHADFSKVFLAGDSAGANIAHHMAIRVDKEKLPPENFKISGMILFHPYFLSKALIEEMEVEAMRYYERLWRIASPDSGNGVEDPWINVVGSDLTGLGCRRVLVMVAGNDVLARGGWSYVAELEKSGWIGKVKVMETKEEGHVFHLRDPDSENARRVLRNFAEFLKEETF.

Met1 is modified (N-acetylmethionine). The Involved in the stabilization of the negatively charged intermediate by the formation of the oxyanion hole signature appears at 79 to 81 (HGG). Active-site residues include Ser163, Asp258, and His290.

The protein belongs to the 'GDXG' lipolytic enzyme family. In terms of tissue distribution, expressed in roots, stems, flowers and siliques.

The catalysed reaction is a carboxylic ester + H2O = an alcohol + a carboxylate + H(+). Carboxylesterase acting on esters with varying acyl chain length. The polypeptide is Probable carboxylesterase 1 (CXE1) (Arabidopsis thaliana (Mouse-ear cress)).